A 223-amino-acid polypeptide reads, in one-letter code: Small ribosomal subunit protein uS3 (223 aa).

The KH type-2 domain maps to V39–R107.

The protein belongs to the universal ribosomal protein uS3 family. In terms of assembly, part of the 30S ribosomal subunit. Forms a tight complex with proteins S10 and S14.

Binds the lower part of the 30S subunit head. Binds mRNA in the 70S ribosome, positioning it for translation. This is Small ribosomal subunit protein uS3 from Francisella tularensis subsp. mediasiatica (strain FSC147).